A 111-amino-acid polypeptide reads, in one-letter code: Beta-defensin 126 (111 aa).

An N-terminal signal peptide occupies residues 1-20; sequence MKSLLFTLAVFMLLAQLVSG. Residues 21-63 are in vitro binds to LPS, mediates antimicrobial activity and inhibits LPS-mediated inflammation; it reads NWYVKKCLNDVGICKKKCKPEEMHVKNGWAMCGKQRDCCVPAD. 3 disulfide bridges follow: Cys-27–Cys-58, Cys-34–Cys-52, and Cys-38–Cys-59.

Belongs to the beta-defensin family. As to quaternary structure, homodimer or homooligomer; disulfide-linked. In terms of processing, O-glycosylated; glycans contain alpha(2,3)-linked sialic acids.

Its subcellular location is the secreted. Functionally, highly glycosylated atypical beta-defensin involved in several aspects of sperm function. Facilitates sperm transport in the female reproductive tract and contributes to sperm protection against immunodetection; both functions are probably implicating the negative surface charge provided by its O-linked oligosaccharides in the sperm glycocalyx. Involved in binding of sperm to oviductal epithelial cells to form a sperm reservoir until ovulation. Release from the sperm surface during capacitation and ovaluation by an elevation of oviductal fluid pH is unmasking other surface components and allows sperm to penetrate the cumulus matrix and bind to the zona pellucida of the oocyte. In vitro has antimicrobial activity and may inhibit LPS-mediated inflammation. The protein is Beta-defensin 126 (DEFB126) of Gorilla gorilla gorilla (Western lowland gorilla).